The following is a 419-amino-acid chain: Tol-Pal system protein TolB (419 aa).

A signal peptide spans 1–19; that stretch reads MCNRIISLFLLLFTGQVIA.

It belongs to the TolB family. In terms of assembly, the Tol-Pal system is composed of five core proteins: the inner membrane proteins TolA, TolQ and TolR, the periplasmic protein TolB and the outer membrane protein Pal. They form a network linking the inner and outer membranes and the peptidoglycan layer.

Its subcellular location is the periplasm. Functionally, part of the Tol-Pal system, which plays a role in outer membrane invagination during cell division and is important for maintaining outer membrane integrity. This is Tol-Pal system protein TolB from Legionella pneumophila (strain Paris).